We begin with the raw amino-acid sequence, 264 residues long: Protein-L-isoaspartate O-methyltransferase (264 aa).

The segment at 1–49 (MRKPVGSKDGSGVYSRQGLDGYTPANSNTRISTATLPRPEPLRPAASSA) is disordered. Positions 24-35 (PANSNTRISTAT) are enriched in polar residues. Ser112 is a catalytic residue.

This sequence belongs to the methyltransferase superfamily. L-isoaspartyl/D-aspartyl protein methyltransferase family.

It localises to the cytoplasm. It carries out the reaction [protein]-L-isoaspartate + S-adenosyl-L-methionine = [protein]-L-isoaspartate alpha-methyl ester + S-adenosyl-L-homocysteine. In terms of biological role, catalyzes the methyl esterification of L-isoaspartyl residues in peptides and proteins that result from spontaneous decomposition of normal L-aspartyl and L-asparaginyl residues. It plays a role in the repair and/or degradation of damaged proteins. This is Protein-L-isoaspartate O-methyltransferase from Bordetella avium (strain 197N).